The chain runs to 185 residues: Ribosome-recycling factor (185 aa).

Belongs to the RRF family.

The protein localises to the cytoplasm. Its function is as follows. Responsible for the release of ribosomes from messenger RNA at the termination of protein biosynthesis. May increase the efficiency of translation by recycling ribosomes from one round of translation to another. This is Ribosome-recycling factor from Shewanella sp. (strain W3-18-1).